Consider the following 295-residue polypeptide: Acetylglutamate kinase (295 aa).

Substrate contacts are provided by residues glycine 67–glycine 68, arginine 89, and asparagine 191.

Belongs to the acetylglutamate kinase family. ArgB subfamily.

The protein localises to the cytoplasm. The enzyme catalyses N-acetyl-L-glutamate + ATP = N-acetyl-L-glutamyl 5-phosphate + ADP. Its pathway is amino-acid biosynthesis; L-arginine biosynthesis; N(2)-acetyl-L-ornithine from L-glutamate: step 2/4. Its function is as follows. Catalyzes the ATP-dependent phosphorylation of N-acetyl-L-glutamate. The sequence is that of Acetylglutamate kinase from Nitrosomonas eutropha (strain DSM 101675 / C91 / Nm57).